The sequence spans 230 residues: MAKTEQDRLKKEAAEKAASMVKSGMILGVGTGSTVAFFIDALGKRKDNDGLKLKAIVTTSNRSKNQLEGLGFKVSELADVDQVDLTVDGSDRVADNLDGIKGGGGALTLEKNVAINSKKIIWIVDESKLVHRLGGFPLPVEVLPISCEQNFKRFKQEGLKPQWRMDSDKRYITHYGNYIIDLAADPVPAPHGLADYLDHTVGVVEHGLFLDMCDEVIIAHSDGTIEDKIK.

Substrate is bound by residues 31–34, 88–91, and 101–104; these read TGST, DGSD, and KGGG. The active-site Proton acceptor is the glutamate 110. Lysine 128 lines the substrate pocket.

The protein belongs to the ribose 5-phosphate isomerase family. In terms of assembly, homodimer.

It carries out the reaction aldehydo-D-ribose 5-phosphate = D-ribulose 5-phosphate. It participates in carbohydrate degradation; pentose phosphate pathway; D-ribose 5-phosphate from D-ribulose 5-phosphate (non-oxidative stage): step 1/1. Its function is as follows. Catalyzes the reversible conversion of ribose-5-phosphate to ribulose 5-phosphate. The protein is Ribose-5-phosphate isomerase A of Lactobacillus helveticus (strain DPC 4571).